We begin with the raw amino-acid sequence, 258 residues long: Thiazole synthase (258 aa).

Lys100 functions as the Schiff-base intermediate with DXP in the catalytic mechanism. 1-deoxy-D-xylulose 5-phosphate is bound by residues Gly161, 187–188, and 209–210; these read AG and NT.

This sequence belongs to the ThiG family. As to quaternary structure, homotetramer. Forms heterodimers with either ThiH or ThiS.

The protein localises to the cytoplasm. The enzyme catalyses [ThiS sulfur-carrier protein]-C-terminal-Gly-aminoethanethioate + 2-iminoacetate + 1-deoxy-D-xylulose 5-phosphate = [ThiS sulfur-carrier protein]-C-terminal Gly-Gly + 2-[(2R,5Z)-2-carboxy-4-methylthiazol-5(2H)-ylidene]ethyl phosphate + 2 H2O + H(+). Its pathway is cofactor biosynthesis; thiamine diphosphate biosynthesis. Its function is as follows. Catalyzes the rearrangement of 1-deoxy-D-xylulose 5-phosphate (DXP) to produce the thiazole phosphate moiety of thiamine. Sulfur is provided by the thiocarboxylate moiety of the carrier protein ThiS. In vitro, sulfur can be provided by H(2)S. The polypeptide is Thiazole synthase (Campylobacter jejuni subsp. jejuni serotype O:6 (strain 81116 / NCTC 11828)).